The chain runs to 301 residues: Large ribosomal subunit protein uL18 (301 aa).

Residues 257–271 are compositionally biased toward basic and acidic residues; that stretch reads NPERVKSTKKNDKPK. Residues 257–283 form a disordered region; it reads NPERVKSTKKNDKPKRDHKKFYPTKLT.

The protein belongs to the universal ribosomal protein uL18 family. In terms of assembly, component of the large ribosomal subunit (LSU).

The protein localises to the cytoplasm. It localises to the nucleus. Component of the ribosome, a large ribonucleoprotein complex responsible for the synthesis of proteins in the cell. The small ribosomal subunit (SSU) binds messenger RNAs (mRNAs) and translates the encoded message by selecting cognate aminoacyl-transfer RNA (tRNA) molecules. The large subunit (LSU) contains the ribosomal catalytic site termed the peptidyl transferase center (PTC), which catalyzes the formation of peptide bonds, thereby polymerizing the amino acids delivered by tRNAs into a polypeptide chain. The nascent polypeptides leave the ribosome through a tunnel in the LSU and interact with protein factors that function in enzymatic processing, targeting, and the membrane insertion of nascent chains at the exit of the ribosomal tunnel. The sequence is that of Large ribosomal subunit protein uL18 (RPL5) from Tetrahymena thermophila (strain SB210).